The primary structure comprises 203 residues: bMERB domain-containing protein 1 (203 aa).

The 147-residue stretch at 3–149 (LKQSLSVHLE…EQEEDKEMAD (147 aa)) folds into the bMERB domain. The segment at 161 to 184 (VTKTSASSRAEKKAEPPPSKPTVA) is disordered.

The sequence is that of bMERB domain-containing protein 1 (Bmerb1) from Mus musculus (Mouse).